A 260-amino-acid chain; its full sequence is Thiazole synthase (260 aa).

Lys-96 serves as the catalytic Schiff-base intermediate with DXP. 1-deoxy-D-xylulose 5-phosphate is bound by residues Gly-157, Ala-184–Gly-185, and Asn-206–Thr-207.

Belongs to the ThiG family. As to quaternary structure, homotetramer. Forms heterodimers with either ThiH or ThiS.

The protein resides in the cytoplasm. It catalyses the reaction [ThiS sulfur-carrier protein]-C-terminal-Gly-aminoethanethioate + 2-iminoacetate + 1-deoxy-D-xylulose 5-phosphate = [ThiS sulfur-carrier protein]-C-terminal Gly-Gly + 2-[(2R,5Z)-2-carboxy-4-methylthiazol-5(2H)-ylidene]ethyl phosphate + 2 H2O + H(+). It functions in the pathway cofactor biosynthesis; thiamine diphosphate biosynthesis. Catalyzes the rearrangement of 1-deoxy-D-xylulose 5-phosphate (DXP) to produce the thiazole phosphate moiety of thiamine. Sulfur is provided by the thiocarboxylate moiety of the carrier protein ThiS. In vitro, sulfur can be provided by H(2)S. The polypeptide is Thiazole synthase (Rhodopseudomonas palustris (strain BisB18)).